Here is a 256-residue protein sequence, read N- to C-terminus: 5-keto-4-deoxy-D-glucarate aldolase (256 aa).

Residue histidine 50 is the Proton acceptor of the active site. Glutamine 151 provides a ligand contact to substrate. Residue glutamate 153 coordinates Mg(2+). 2 residues coordinate substrate: serine 178 and aspartate 179. Aspartate 179 provides a ligand contact to Mg(2+).

Belongs to the HpcH/HpaI aldolase family. KDGluc aldolase subfamily. Homohexamer; trimer of dimers. It depends on Mg(2+) as a cofactor.

It carries out the reaction 5-dehydro-4-deoxy-D-glucarate = 2-hydroxy-3-oxopropanoate + pyruvate. The catalysed reaction is 2-dehydro-3-deoxy-D-glucarate = 2-hydroxy-3-oxopropanoate + pyruvate. Its pathway is carbohydrate acid metabolism; galactarate degradation; D-glycerate from galactarate: step 2/3. Catalyzes the reversible retro-aldol cleavage of both 5-keto-4-deoxy-D-glucarate and 2-keto-3-deoxy-D-glucarate to pyruvate and tartronic semialdehyde. In Klebsiella pneumoniae subsp. pneumoniae (strain ATCC 700721 / MGH 78578), this protein is 5-keto-4-deoxy-D-glucarate aldolase.